A 429-amino-acid chain; its full sequence is Histidine--tRNA ligase (429 aa).

This sequence belongs to the class-II aminoacyl-tRNA synthetase family. Homodimer.

It localises to the cytoplasm. It catalyses the reaction tRNA(His) + L-histidine + ATP = L-histidyl-tRNA(His) + AMP + diphosphate + H(+). In Streptococcus pneumoniae (strain P1031), this protein is Histidine--tRNA ligase.